A 1076-amino-acid chain; its full sequence is Nickel-cobalt-cadmium resistance protein NccA (1076 aa).

Transmembrane regions (helical) follow at residues 14-34 (WLVL…LNLL), 367-387 (VAKN…ALLG), 391-411 (AAVI…IGMN), 419-439 (LMSL…IIVE), 476-496 (TVYG…FQGV), 503-523 (PMVI…LTFV), 562-582 (MPFL…FTFV), 904-924 (LAII…MAIG), 929-949 (TATV…ALVL), 960-980 (VGFI…ISAI), 1004-1024 (PVLM…IATG), and 1036-1056 (VVIG…PAVC).

The protein belongs to the resistance-nodulation-cell division (RND) (TC 2.A.6) family.

Its subcellular location is the cell membrane. Functionally, component of the NCC cation-efflux system that confers resistance to nickel, cobalt and cadmium. May form a membrane tunnel, which allows ion transport across the membrane. The polypeptide is Nickel-cobalt-cadmium resistance protein NccA (nccA) (Alcaligenes xylosoxydans xylosoxydans (Achromobacter xylosoxidans)).